The primary structure comprises 375 residues: Alcohol dehydrogenase 6 (375 aa).

Zn(2+) is bound by residues C47, H69, C99, C102, C105, C113, and C175. Residues 200-205 (GLGGVG), D224, K229, 293-295 (VGS), and R370 contribute to the NAD(+) site.

This sequence belongs to the zinc-containing alcohol dehydrogenase family. Class-V subfamily. Dimer. Zn(2+) is required as a cofactor. In terms of tissue distribution, liver.

It is found in the cytoplasm. It carries out the reaction a primary alcohol + NAD(+) = an aldehyde + NADH + H(+). The catalysed reaction is a secondary alcohol + NAD(+) = a ketone + NADH + H(+). In terms of biological role, alcohol dehydrogenase. Catalyzes the NAD-dependent oxidation of primary alcohols to the corresponding aldehydes. Oxidizes secondary alcohols to the corresponding ketones. This Peromyscus maniculatus (North American deer mouse) protein is Alcohol dehydrogenase 6 (ADH6).